The following is a 366-amino-acid chain: Zinc transporter ZIP13 (366 aa).

The Lumenal portion of the chain corresponds to 1–5 (MTKQK). Residues 6–26 (LLLNGTFSLILIVACEAQQLP) form a helical membrane-spanning segment. The Cytoplasmic portion of the chain corresponds to 27–57 (RSHAASSSGPLCEKEAESWGNLLSSERLDAW). The helical transmembrane segment at 58–78 (ICSLIGSFMVGLSGIFPLLVI) threads the bilayer. Residues 79–97 (PFETGAALRSEAGSRRLKQ) are Lumenal-facing. The chain crosses the membrane as a helical span at residues 98 to 118 (LLSFAIGGLLGNVFLHLLPEA). At 119 to 137 (WAYTCSAAAGEGQSFQQQK) the chain is on the cytoplasmic side. The chain crosses the membrane as a helical span at residues 138 to 158 (LLGLWVIIGFLTFLALEKIFL). Residues 159–225 (EKEEEECPGV…NRIKISGYLN (67 aa)) are Lumenal-facing. The disordered stretch occupies residues 183–205 (SGYPPSKVAGKSQRAEKNSTQCN). The chain crosses the membrane as a helical span at residues 226–246 (LLANTIDNFTHGLAVAASFLV). The Cytoplasmic portion of the chain corresponds to 247 to 282 (SRKVGFLTTMAILLHEIPHEVGDFAILLRAGFDRWS). An XEXPHE-motif motif is present at residues 261–266 (HEIPHE). Residues 283 to 303 (AAKMQLSTALGGIVGACFAIC) form a helical membrane-spanning segment. Residues 304 to 313 (AQSPKGAGET) lie on the Lumenal side of the membrane. Residues 314-334 (VAWILPFTSGGFLYIALVNVV) traverse the membrane as a helical segment. Residues 335–343 (PDLLEEKNP) lie on the Cytoplasmic side of the membrane. A helical membrane pass occupies residues 344-364 (WNSLQQILLLCTGITVMVLLA). Topologically, residues 365 to 366 (HN) are lumenal.

Belongs to the ZIP transporter (TC 2.A.5) family. Homodimer.

The protein localises to the golgi apparatus membrane. Its subcellular location is the cytoplasmic vesicle membrane. It localises to the endoplasmic reticulum membrane. The catalysed reaction is Zn(2+)(in) = Zn(2+)(out). Functionally, functions as a zinc transporter transporting Zn(2+) from the Golgi apparatus to the cytosol and thus influences the zinc level at least in areas of the cytosol. This Gallus gallus (Chicken) protein is Zinc transporter ZIP13.